Reading from the N-terminus, the 82-residue chain is Cortexin-1 (82 aa).

The tract at residues 1 to 20 (MSSAWTLSPEPLPPSTGPPV) is disordered. The chain crosses the membrane as a helical span at residues 30 to 50 (TVFAFVLCLLVVLVLLMVRCV).

This sequence belongs to the cortexin family.

It is found in the membrane. Functionally, may mediate extracellular or intracellular signaling of cortical neurons during forebrain development. The sequence is that of Cortexin-1 (Ctxn1) from Mus musculus (Mouse).